Here is a 299-residue protein sequence, read N- to C-terminus: Deoxyhypusine hydroxylase (299 aa).

5 HEAT-like PBS-type repeats span residues 54 to 80 (LKHE…VLQD), 87 to 113 (VRHE…YSED), 174 to 200 (DRYR…GLRA), 205 to 231 (FRHE…ALRS), and 238 to 264 (VRHE…FAQD). Fe cation-binding residues include His-56, His-89, and Glu-90. 3 residues coordinate Fe cation: His-207, His-240, and Glu-241.

This sequence belongs to the deoxyhypusine hydroxylase family. The cofactor is Fe(2+).

It catalyses the reaction [eIF5A protein]-deoxyhypusine + AH2 + O2 = [eIF5A protein]-hypusine + A + H2O. It functions in the pathway protein modification; eIF5A hypusination. In terms of biological role, catalyzes the hydroxylation of the N(6)-(4-aminobutyl)-L-lysine intermediate produced by deoxyhypusine synthase/DHPS on a critical lysine of the eukaryotic translation initiation factor 5A/eIF-5A. This is the second step of the post-translational modification of that lysine into an unusual amino acid residue named hypusine. Hypusination is unique to mature eIF-5A factor and is essential for its function. In Gallus gallus (Chicken), this protein is Deoxyhypusine hydroxylase.